We begin with the raw amino-acid sequence, 95 residues long: Putative regulatory protein Pmob_0099 (95 aa).

This sequence belongs to the RemA family.

The protein is Putative regulatory protein Pmob_0099 of Petrotoga mobilis (strain DSM 10674 / SJ95).